Reading from the N-terminus, the 272-residue chain is Ribosomal RNA small subunit methyltransferase A (272 aa).

S-adenosyl-L-methionine contacts are provided by Asn18, Leu20, Gly45, Glu66, Asp91, and Asn113.

This sequence belongs to the class I-like SAM-binding methyltransferase superfamily. rRNA adenine N(6)-methyltransferase family. RsmA subfamily.

It localises to the cytoplasm. The catalysed reaction is adenosine(1518)/adenosine(1519) in 16S rRNA + 4 S-adenosyl-L-methionine = N(6)-dimethyladenosine(1518)/N(6)-dimethyladenosine(1519) in 16S rRNA + 4 S-adenosyl-L-homocysteine + 4 H(+). Its function is as follows. Specifically dimethylates two adjacent adenosines (A1518 and A1519) in the loop of a conserved hairpin near the 3'-end of 16S rRNA in the 30S particle. May play a critical role in biogenesis of 30S subunits. This is Ribosomal RNA small subunit methyltransferase A from Yersinia pseudotuberculosis serotype O:1b (strain IP 31758).